The following is a 485-amino-acid chain: Aspartyl/glutamyl-tRNA(Asn/Gln) amidotransferase subunit B (485 aa).

The protein belongs to the GatB/GatE family. GatB subfamily. As to quaternary structure, heterotrimer of A, B and C subunits.

The catalysed reaction is L-glutamyl-tRNA(Gln) + L-glutamine + ATP + H2O = L-glutaminyl-tRNA(Gln) + L-glutamate + ADP + phosphate + H(+). It carries out the reaction L-aspartyl-tRNA(Asn) + L-glutamine + ATP + H2O = L-asparaginyl-tRNA(Asn) + L-glutamate + ADP + phosphate + 2 H(+). Allows the formation of correctly charged Asn-tRNA(Asn) or Gln-tRNA(Gln) through the transamidation of misacylated Asp-tRNA(Asn) or Glu-tRNA(Gln) in organisms which lack either or both of asparaginyl-tRNA or glutaminyl-tRNA synthetases. The reaction takes place in the presence of glutamine and ATP through an activated phospho-Asp-tRNA(Asn) or phospho-Glu-tRNA(Gln). The sequence is that of Aspartyl/glutamyl-tRNA(Asn/Gln) amidotransferase subunit B from Borrelia recurrentis (strain A1).